The sequence spans 427 residues: Lipophilic envelope-spanning tunnel protein A (427 aa).

The Cytoplasmic portion of the chain corresponds to 1-75 (MALNTPQITP…LTRLAAMAFT (75 aa)). A helical membrane pass occupies residues 76 to 96 (MLLLMPFAWGEPLLHIWLLGI). Residues 97–120 (RIDANVMQGIWQMTKQGDAITGSM) lie on the Periplasmic side of the membrane. Residues 121–141 (VFFCVIGAPLILVTSIAYLWF) form a helical membrane-spanning segment. Over 142–269 (GNRLGMNLRP…RHSLQKCWAA (128 aa)) the chain is Cytoplasmic. The chain crosses the membrane as a helical span at residues 270-290 (LLASIVLLLPANLLPISIIYL). Residues 291–310 (NGGRQEDTILSGIMSLASSN) are Periplasmic-facing. The chain crosses the membrane as a helical span at residues 311–331 (IAVAGIVFIASILVPFTKVIV). The Cytoplasmic portion of the chain corresponds to 332-350 (MFTLLLSIHFKCQQGLRTR). A helical transmembrane segment spans residues 351 to 371 (ILLLRMVTWIGRWSMLDLFVI). Over 372–382 (SLTMSLINRDQ) the chain is Periplasmic. Residues 383 to 403 (ILAFTMGPAAFYFGAAVILTI) traverse the membrane as a helical segment. At 404-427 (LAVEWLDSRLLWDAHESGNARFDD) the chain is on the cytoplasmic side.

This sequence belongs to the PqiA family. As to quaternary structure, may interact with LetB in the inner membrane.

It localises to the cell inner membrane. Functionally, could be part, together with LetB, of a system that transports lipids between the inner membrane and the outer membrane. Contributes to membrane integrity. The polypeptide is Lipophilic envelope-spanning tunnel protein A (Escherichia coli (strain K12)).